The sequence spans 99 residues: Large ribosomal subunit protein uL23 (99 aa).

It belongs to the universal ribosomal protein uL23 family. Part of the 50S ribosomal subunit. Contacts protein L29, and trigger factor when it is bound to the ribosome.

Functionally, one of the early assembly proteins it binds 23S rRNA. One of the proteins that surrounds the polypeptide exit tunnel on the outside of the ribosome. Forms the main docking site for trigger factor binding to the ribosome. In Agathobacter rectalis (strain ATCC 33656 / DSM 3377 / JCM 17463 / KCTC 5835 / VPI 0990) (Eubacterium rectale), this protein is Large ribosomal subunit protein uL23.